The following is a 447-amino-acid chain: Serine/threonine-protein phosphatase 2A 55 kDa regulatory subunit B gamma isoform (447 aa).

7 WD repeats span residues 22–61 (TEAD…KNAP), 87–128 (EIEE…KRPE), 171–209 (GHTY…RSFN), 220–260 (DLTE…LCDK), 279–317 (EIIS…RPIE), 334–375 (ENDC…DVTL), and 410–446 (DFTK…NSDV).

Belongs to the phosphatase 2A regulatory subunit B family. In terms of assembly, PP2A consists of a common heterodimeric core enzyme, composed of a 36 kDa catalytic subunit (subunit C) and a 65 kDa constant regulatory subunit (PR65 or subunit A), that associates with a variety of regulatory subunits. Proteins that associate with the core dimer include three families of regulatory subunits B (the R2/B/PR55/B55, R3/B''/PR72/PR130/PR59 and R5/B'/B56 families), the 48 kDa variable regulatory subunit, viral proteins, and cell signaling molecules. Interacts with IER5. In terms of tissue distribution, highly expressed in brain.

In terms of biological role, the B regulatory subunit might modulate substrate selectivity and catalytic activity, and might also direct the localization of the catalytic enzyme to a particular subcellular compartment. This chain is Serine/threonine-protein phosphatase 2A 55 kDa regulatory subunit B gamma isoform (PPP2R2C), found in Oryctolagus cuniculus (Rabbit).